The following is a 173-amino-acid chain: Alpha-crystallin A chain (173 aa).

Met-1 carries the post-translational modification N-acetylmethionine. Residues Met-1–Glu-63 form a required for complex formation with BFSP1 and BFSP2 region. Residue Gln-6 is modified to Deamidated glutamine; partial. The residue at position 45 (Ser-45) is a Phosphoserine. The residue at position 50 (Gln-50) is a Deamidated glutamine; partial. One can recognise a sHSP domain in the interval Leu-52 to Ser-162. Lys-70 and Lys-99 each carry N6-acetyllysine. The Zn(2+) site is built by His-100, Glu-102, and His-107. Residues Lys-145–Ser-173 are disordered. O-linked (GlcNAc) serine glycosylation is present at Ser-162.

The protein belongs to the small heat shock protein (HSP20) family. As to quaternary structure, heteromer composed of three CRYAA and one CRYAB subunits. Zinc coordination is achieved at least by His-100, Glu-102 and His-107. His-100 and Glu-102 come from the same molecule within the oligomer, while His-107 residue is provided by another molecule. Inter-subunit bridging via zinc ions enhances stability, which is crucial as there is no protein turn over in the lens. Can also form homodimers and homotetramers (dimers of dimers) which serve as the building blocks of homooligomers. Part of a complex required for lens intermediate filament formation composed of BFSP1, BFSP2 and CRYAA. In terms of processing, acetylation at Lys-70 may increase chaperone activity. Undergoes age-dependent proteolytical cleavage at the C-terminus.

Its subcellular location is the cytoplasm. It is found in the nucleus. Functionally, contributes to the transparency and refractive index of the lens. Acts as a chaperone, preventing aggregation of various proteins under a wide range of stress conditions. Required for the correct formation of lens intermediate filaments as part of a complex composed of BFSP1, BFSP2 and CRYAA. The protein is Alpha-crystallin A chain (CRYAA) of Erinaceus europaeus (Western European hedgehog).